A 697-amino-acid polypeptide reads, in one-letter code: MCRSLRYCVSHCLYLAMTRLEEVNREVNMHSSVRYLGYLARINLLVAICLGLYVRWEKTANSLILVIFILGLFVLGIASILYYYFSMEAASLSLSNLWFGFLLGLLCFLDNSSFKSDVKEETTKYLLLTSIVLRILCALVERISGYVRHRPTLLTTVEFLELVGFAIASTTMLVEKSLSVILLVMALAMLIIDLRMKSFLAIPNLIIFSVLLFFSSLETPQNPIAFACFFICLVTDPFLDIYFSGLSVTERWKPFLHRGRICRRLSVLFTAMIELTFFILSAFKLRDTHLWYFVIPGFSIFGFFWMICHIIFLLTLWGFHTKLNDCHKVYINHRADNNSLDRIMASKGMRHFCLISEQLVFFSLLATAILGAVSWQPTNGIFLSMFLIVLPLESMAHGLFHELGNCLGGTSVGYAIVIPTNFCSPDGQPTLLPPEHVQELNLRSTGMLNAIQRFFAYHMIETYGCDYSTSGLSFDTLHSKLKAFLELRTVDGPRHDTYVLYYSGHTHGSGEWALAGGDILRLDTLLEWWREKNGSFCSRLIIILDSENSTPWVKEVRKINDQYVAVQGAELAKTVDIEEADPPQLGDFTRDWVEYNCNSTNNICWTEKGRTVRAVYGVSKRWSDYTLHLPTGSDVAKHWMLHFPRVTYPLVHLANWLCGLNLFWVCKACFRCLKRLKMSWFLPTVLDTGQGFKLVKS.

3 helical membrane passes run 36 to 56, 63 to 83, and 89 to 109; these read LGYL…YVRW, LILV…ILYY, and AASL…LCFL. Asparagine 111 is a glycosylation site (N-linked (GlcNAc...) asparagine). Transmembrane regions (helical) follow at residues 172-192, 199-219, 223-243, 265-285, and 293-313; these read MLVE…MLII, FLAI…SLET, PIAF…DIYF, LSVL…AFKL, and FVIP…IIFL. Asparagine 337 carries N-linked (GlcNAc...) asparagine glycosylation. The next 2 membrane-spanning stretches (helical) occupy residues 352 to 372 and 380 to 400; these read FCLI…ILGA and GIFL…HGLF. 2 N-linked (GlcNAc...) asparagine glycosylation sites follow: asparagine 533 and asparagine 598.

The protein belongs to the TMEM168 family.

It localises to the nucleus membrane. Its function is as follows. Plays a key role in maintaining the cardiac electrical stability by modulating cell surface expression of SCN5A. Plays a role i the modulation of anxiety behavior by regulating GABAergic neuronal system in the nucleus accumbens. The protein is Transmembrane protein 168 (Tmem168) of Mus musculus (Mouse).